We begin with the raw amino-acid sequence, 465 residues long: MIEQIGADSKSAENKQERKLYIETYGCQMNVADSEVVASVMQMDGYSLTDNVDEADTILVNTCSVRDNAEQKVLNRLAYYHSLRKKRRASSRLVIGVLGCMAERVKEELIREHHVDVVAGPDSYLDLPNLVGAAEQGEKAINVELSMQETYKDVMPLKMGGVHINGFVSIMRGCNNFCSYCIVPYTRGRERSREIESILNEVRDLKAKNFREVTLLGQNVNSYRYEQNGRIIRFPDLLAAVAEAVPDMRIRFTSPHPKDMDDEAIAVMARYRNICNHIHLPAQSGSDKMLRVMKRGYTRRWYLDRVAAIRRAIPDCAISSDLFCGFHSETEEDFEATLSLMEEVGYDSAFMFKYSERPGTYAARHLVDDVLEEVKLARLDRMIALQNRLSEESNKRDISKTFEVLIEGFSKRSREQLFGRTQQNKVVIFDKNGHRVGQYIYVRIKDASSATLFGEVVEAPTSEKG.

The 119-residue stretch at 18 to 136 (RKLYIETYGC…LPNLVGAAEQ (119 aa)) folds into the MTTase N-terminal domain. Positions 27, 63, 100, 174, 178, and 181 each coordinate [4Fe-4S] cluster. A Radical SAM core domain is found at 160–392 (GGVHINGFVS…IALQNRLSEE (233 aa)). Positions 395-458 (KRDISKTFEV…SATLFGEVVE (64 aa)) constitute a TRAM domain.

The protein belongs to the methylthiotransferase family. MiaB subfamily. As to quaternary structure, monomer. Requires [4Fe-4S] cluster as cofactor.

Its subcellular location is the cytoplasm. The catalysed reaction is N(6)-dimethylallyladenosine(37) in tRNA + (sulfur carrier)-SH + AH2 + 2 S-adenosyl-L-methionine = 2-methylsulfanyl-N(6)-dimethylallyladenosine(37) in tRNA + (sulfur carrier)-H + 5'-deoxyadenosine + L-methionine + A + S-adenosyl-L-homocysteine + 2 H(+). Its function is as follows. Catalyzes the methylthiolation of N6-(dimethylallyl)adenosine (i(6)A), leading to the formation of 2-methylthio-N6-(dimethylallyl)adenosine (ms(2)i(6)A) at position 37 in tRNAs that read codons beginning with uridine. This chain is tRNA-2-methylthio-N(6)-dimethylallyladenosine synthase, found in Porphyromonas gingivalis (strain ATCC 33277 / DSM 20709 / CIP 103683 / JCM 12257 / NCTC 11834 / 2561).